Here is a 190-residue protein sequence, read N- to C-terminus: PBP1-interacting protein LSM12 (190 aa).

The region spanning 2 to 69 (PVCNNDSQLI…IKEVTALRDN (68 aa)) is the Sm domain. Positions 84–190 (PSMQAARDRS…ERVQKTLSKK (107 aa)) constitute an AD domain.

It belongs to the LSM12 family. Forms a complex composed of at least MKT1, PBP1, XAC1 and LSM12. Forms a complex composed of at least MKT1L, PBP1, XAC1 and LSM12. Within the complex, interacts with PBP1; the interaction is direct.

In terms of biological role, involved in post-transcriptional regulation of gene expression. The polypeptide is PBP1-interacting protein LSM12 (Trypanosoma brucei brucei (strain 927/4 GUTat10.1)).